Consider the following 185-residue polypeptide: Peptidyl-tRNA hydrolase (185 aa).

Tyr14 is a binding site for tRNA. The active-site Proton acceptor is His19. Residues Phe64, Asn66, and Asn112 each coordinate tRNA.

The protein belongs to the PTH family. Monomer.

The protein localises to the cytoplasm. It carries out the reaction an N-acyl-L-alpha-aminoacyl-tRNA + H2O = an N-acyl-L-amino acid + a tRNA + H(+). Functionally, hydrolyzes ribosome-free peptidyl-tRNAs (with 1 or more amino acids incorporated), which drop off the ribosome during protein synthesis, or as a result of ribosome stalling. Catalyzes the release of premature peptidyl moieties from peptidyl-tRNA molecules trapped in stalled 50S ribosomal subunits, and thus maintains levels of free tRNAs and 50S ribosomes. This Alkaliphilus metalliredigens (strain QYMF) protein is Peptidyl-tRNA hydrolase.